The sequence spans 21 residues: Fibrinogen beta chain (21 aa).

The residue at position 1 (Q1) is a Pyrrolidone carboxylic acid. Acidic residues predominate over residues 1 to 11 (QHSTDYDEEEE). Residues 1 to 21 (QHSTDYDEEEEDRAKLHLDAR) are disordered. The O-linked (GalNAc...) threonine glycan is linked to T4. Y6 is subject to Sulfotyrosine. The segment covering 12 to 21 (DRAKLHLDAR) has biased composition (basic and acidic residues).

As to quaternary structure, heterohexamer; disulfide linked. Contains 2 sets of 3 non-identical chains (alpha, beta and gamma). The 2 heterotrimers are in head to head conformation with the N-termini in a small central domain. In terms of processing, conversion of fibrinogen to fibrin is triggered by thrombin, which cleaves fibrinopeptides A and B from alpha and beta chains, and thus exposes the N-terminal polymerization sites responsible for the formation of the soft clot.

The protein resides in the secreted. In terms of biological role, cleaved by the protease thrombin to yield monomers which, together with fibrinogen alpha (FGA) and fibrinogen gamma (FGG), polymerize to form an insoluble fibrin matrix. Fibrin has a major function in hemostasis as one of the primary components of blood clots. In addition, functions during the early stages of wound repair to stabilize the lesion and guide cell migration during re-epithelialization. Was originally thought to be essential for platelet aggregation, based on in vitro studies using anticoagulated blood. However subsequent studies have shown that it is not absolutely required for thrombus formation in vivo. Enhances expression of SELP in activated platelets. Maternal fibrinogen is essential for successful pregnancy. Fibrin deposition is also associated with infection, where it protects against IFNG-mediated hemorrhage. May also facilitate the antibacterial immune response via both innate and T-cell mediated pathways. The protein is Fibrinogen beta chain (FGB) of Cervus elaphus (Red deer).